Reading from the N-terminus, the 373-residue chain is Histidine protein methyltransferase 1 homolog (373 aa).

A compositionally biased stretch (basic and acidic residues) spans 30-42 (SKESLVSERQKGT). Disordered regions lie at residues 30–52 (SKES…STEQ) and 64–94 (KSER…HEEK). Polar residues predominate over residues 70-88 (APSQDPDSSFGAANSSSNL). Phosphoserine occurs at positions 72 and 77. Histidine 154 carries the post-translational modification Tele-methylhistidine. S-adenosyl-L-methionine-binding positions include 168–172 (IWECT), glycine 195, and 216–218 (QDY). Residues 247–253 (PDVKRLR) carry the Nuclear localization signal motif. S-adenosyl-L-methionine-binding positions include 269 to 271 (GEW) and serine 294.

The protein belongs to the methyltransferase superfamily. METTL18 family. As to quaternary structure, interacts with GRWD1 and members of the heat shock protein 90 and 70 families; these proteins may possibly be methylation substrates for the enzyme. Post-translationally, monomethylated at His-154 through automethylation. Automethylation at His-154 positively regulates the methyltransferase activity toward RPL3. Probably methylated on other residues.

It localises to the cytoplasm. The protein resides in the cytosol. The protein localises to the nucleus. It is found in the nucleolus. It carries out the reaction L-histidyl-[protein] + S-adenosyl-L-methionine = N(tele)-methyl-L-histidyl-[protein] + S-adenosyl-L-homocysteine + H(+). Functionally, protein-L-histidine N-tele-methyltransferase that specifically monomethylates RPL3, thereby regulating translation elongation. Histidine methylation of RPL3 regulates translation elongation by slowing ribosome traversal on tyrosine codons: slower elongation provides enough time for proper folding of synthesized proteins and prevents cellular aggregation of tyrosine-rich proteins. The polypeptide is Histidine protein methyltransferase 1 homolog (METTL18) (Bos taurus (Bovine)).